Reading from the N-terminus, the 135-residue chain is ATP synthase epsilon chain (135 aa).

The disordered stretch occupies residues 84-107 (SLSEEKQSEEQKQRLERAKKALSS). A compositionally biased stretch (basic and acidic residues) spans 86–102 (SEEKQSEEQKQRLERAK).

Belongs to the ATPase epsilon chain family. In terms of assembly, F-type ATPases have 2 components, CF(1) - the catalytic core - and CF(0) - the membrane proton channel. CF(1) has five subunits: alpha(3), beta(3), gamma(1), delta(1), epsilon(1). CF(0) has three main subunits: a, b and c.

The protein localises to the cell membrane. In terms of biological role, produces ATP from ADP in the presence of a proton gradient across the membrane. In Elusimicrobium minutum (strain Pei191), this protein is ATP synthase epsilon chain.